Consider the following 539-residue polypeptide: CTP synthase (539 aa).

Positions 1–267 (MTKYIFVTGG…DQKVCDFLHL (267 aa)) are amidoligase domain. Position 13 (Ser-13) interacts with CTP. Ser-13 serves as a coordination point for UTP. 14-19 (SLGKGI) provides a ligand contact to ATP. Residue Tyr-54 coordinates L-glutamine. Position 71 (Asp-71) interacts with ATP. Positions 71 and 141 each coordinate Mg(2+). CTP contacts are provided by residues 148 to 150 (DIE), 188 to 193 (KTKPTQ), and Lys-224. UTP-binding positions include 188-193 (KTKPTQ) and Lys-224. In terms of domain architecture, Glutamine amidotransferase type-1 spans 294 to 537 (KITLVGKYVE…IGAASGLPAQ (244 aa)). Gly-356 contributes to the L-glutamine binding site. The active-site Nucleophile; for glutamine hydrolysis is Cys-383. L-glutamine is bound by residues 384 to 387 (LGMQ), Glu-407, and Arg-465. Active-site residues include His-510 and Glu-512.

This sequence belongs to the CTP synthase family. As to quaternary structure, homotetramer.

The catalysed reaction is UTP + L-glutamine + ATP + H2O = CTP + L-glutamate + ADP + phosphate + 2 H(+). It catalyses the reaction L-glutamine + H2O = L-glutamate + NH4(+). The enzyme catalyses UTP + NH4(+) + ATP = CTP + ADP + phosphate + 2 H(+). It participates in pyrimidine metabolism; CTP biosynthesis via de novo pathway; CTP from UDP: step 2/2. Allosterically activated by GTP, when glutamine is the substrate; GTP has no effect on the reaction when ammonia is the substrate. The allosteric effector GTP functions by stabilizing the protein conformation that binds the tetrahedral intermediate(s) formed during glutamine hydrolysis. Inhibited by the product CTP, via allosteric rather than competitive inhibition. Catalyzes the ATP-dependent amination of UTP to CTP with either L-glutamine or ammonia as the source of nitrogen. Regulates intracellular CTP levels through interactions with the four ribonucleotide triphosphates. The polypeptide is CTP synthase (Lactobacillus acidophilus (strain ATCC 700396 / NCK56 / N2 / NCFM)).